A 497-amino-acid chain; its full sequence is Serine hydroxymethyltransferase (497 aa).

(6S)-5,6,7,8-tetrahydrofolate is bound by residues Leu176 and 180-182 (GHL). Position 289 is an N6-(pyridoxal phosphate)lysine (Lys289).

This sequence belongs to the SHMT family. As to quaternary structure, homodimer. Requires pyridoxal 5'-phosphate as cofactor.

The protein resides in the cytoplasm. It catalyses the reaction (6R)-5,10-methylene-5,6,7,8-tetrahydrofolate + glycine + H2O = (6S)-5,6,7,8-tetrahydrofolate + L-serine. Its pathway is one-carbon metabolism; tetrahydrofolate interconversion. It participates in amino-acid biosynthesis; glycine biosynthesis; glycine from L-serine: step 1/1. Its function is as follows. Catalyzes the reversible interconversion of serine and glycine with tetrahydrofolate (THF) serving as the one-carbon carrier. This reaction serves as the major source of one-carbon groups required for the biosynthesis of purines, thymidylate, methionine, and other important biomolecules. Also exhibits THF-independent aldolase activity toward beta-hydroxyamino acids, producing glycine and aldehydes, via a retro-aldol mechanism. This chain is Serine hydroxymethyltransferase, found in Chlamydia trachomatis serovar A (strain ATCC VR-571B / DSM 19440 / HAR-13).